The primary structure comprises 115 residues: Large ribosomal subunit protein P2x (115 aa).

A disordered region spans residues 78–115 (GGGGGAASAAEPVAESKKKVEEVKDESSDDAGMMGLFD). A compositionally biased stretch (basic and acidic residues) spans 91 to 103 (AESKKKVEEVKDE). Residues Ser-104 and Ser-105 each carry the phosphoserine modification.

The protein belongs to the eukaryotic ribosomal protein P1/P2 family. P1 and P2 exist as dimers at the large ribosomal subunit.

Its function is as follows. Plays an important role in the elongation step of protein synthesis. This chain is Large ribosomal subunit protein P2x (RPP2C), found in Arabidopsis thaliana (Mouse-ear cress).